The sequence spans 217 residues: Large ribosomal subunit protein uL3 (217 aa).

Residues 129 to 162 are disordered; the sequence is SRGPMSHGSKNHRAPGSTGAGTTPGRIYPGKRMA. The span at 142 to 153 shows a compositional bias: low complexity; it reads APGSTGAGTTPG.

It belongs to the universal ribosomal protein uL3 family. In terms of assembly, part of the 50S ribosomal subunit. Forms a cluster with proteins L14 and L19.

In terms of biological role, one of the primary rRNA binding proteins, it binds directly near the 3'-end of the 23S rRNA, where it nucleates assembly of the 50S subunit. This is Large ribosomal subunit protein uL3 from Prochlorococcus marinus (strain MIT 9215).